The chain runs to 85 residues: Acyl carrier protein (85 aa).

The Carrier domain maps to 4 to 79 (DELFEKVKEI…NAVNLLSEKL (76 aa)). Serine 39 is modified (O-(pantetheine 4'-phosphoryl)serine).

Belongs to the acyl carrier protein (ACP) family. 4'-phosphopantetheine is transferred from CoA to a specific serine of apo-ACP by AcpS. This modification is essential for activity because fatty acids are bound in thioester linkage to the sulfhydryl of the prosthetic group.

It localises to the cytoplasm. Its pathway is lipid metabolism; fatty acid biosynthesis. Functionally, carrier of the growing fatty acid chain in fatty acid biosynthesis. This Petrotoga mobilis (strain DSM 10674 / SJ95) protein is Acyl carrier protein.